The chain runs to 90 residues: U7-theraphotoxin-Hhn1k (90 aa).

The signal sequence occupies residues 1 to 19; that stretch reads MKTAIFTVVLALAVFAVLS. Positions 20–50 are excised as a propeptide; the sequence is FGWEANEKALSEEFTELIHEKEAASETEARE. Cystine bridges form between C51/C65 and C58/C70.

This sequence belongs to the neurotoxin 10 (Hwtx-1) family. 13 (Hntx-13) subfamily. In terms of tissue distribution, expressed by the venom gland.

The protein resides in the secreted. In terms of biological role, ion channel inhibitor. In Cyriopagopus hainanus (Chinese bird spider), this protein is U7-theraphotoxin-Hhn1k.